A 376-amino-acid chain; its full sequence is Putative F-box/FBD/LRR-repeat protein At5g52460 (376 aa).

Residues 16 to 75 (RDEISSLPDDLLIQILLLVPIKDAVGTMILSKRWRYVWTLLPKLEYSDPGDECESVWKFL) enclose the F-box domain. LRR repeat units lie at residues 131-154 (CKTL…VCLP) and 199-224 (FAKV…KFLK). Residues 296–348 (CHGTNQGTVPRCLSAHLDEEFVWHGYRGNEEETQLIRYIFANAKCLKKREIST) form the FBD domain.

In Arabidopsis thaliana (Mouse-ear cress), this protein is Putative F-box/FBD/LRR-repeat protein At5g52460 (EDA41).